The chain runs to 355 residues: Heme A synthase (355 aa).

8 helical membrane passes run 21–41 (LARW…VGGI), 85–102 (INLG…FWEW), 136–156 (LFAL…MVAS), 173–193 (LLTA…LGAL), 208–228 (AIGV…VAGL), 264–284 (FLIH…LLLL), 299–319 (ALVI…VSGV), and 322–342 (WVAV…AAAL). A heme-binding site is contributed by H270. Residue H327 participates in heme binding.

This sequence belongs to the COX15/CtaA family. Type 2 subfamily. As to quaternary structure, interacts with CtaB. The cofactor is heme b.

It localises to the cell membrane. It carries out the reaction Fe(II)-heme o + 2 A + H2O = Fe(II)-heme a + 2 AH2. It participates in porphyrin-containing compound metabolism; heme A biosynthesis; heme A from heme O: step 1/1. Its function is as follows. Catalyzes the conversion of heme O to heme A by two successive hydroxylations of the methyl group at C8. The first hydroxylation forms heme I, the second hydroxylation results in an unstable dihydroxymethyl group, which spontaneously dehydrates, resulting in the formyl group of heme A. The chain is Heme A synthase from Sphingopyxis alaskensis (strain DSM 13593 / LMG 18877 / RB2256) (Sphingomonas alaskensis).